The primary structure comprises 175 residues: ATP synthase subunit b (175 aa).

Residues 20–40 traverse the membrane as a helical segment; the sequence is LIFWTAVTFVIVLLILKQLAW.

The protein belongs to the ATPase B chain family. F-type ATPases have 2 components, F(1) - the catalytic core - and F(0) - the membrane proton channel. F(1) has five subunits: alpha(3), beta(3), gamma(1), delta(1), epsilon(1). F(0) has four main subunits: a(1), b(2) and c(10-14). The alpha and beta chains form an alternating ring which encloses part of the gamma chain. F(1) is attached to F(0) by a central stalk formed by the gamma and epsilon chains, while a peripheral stalk is formed by the delta and b chains.

It is found in the cell inner membrane. Its function is as follows. F(1)F(0) ATP synthase produces ATP from ADP in the presence of a proton or sodium gradient. F-type ATPases consist of two structural domains, F(1) containing the extramembraneous catalytic core and F(0) containing the membrane proton channel, linked together by a central stalk and a peripheral stalk. During catalysis, ATP synthesis in the catalytic domain of F(1) is coupled via a rotary mechanism of the central stalk subunits to proton translocation. Functionally, component of the F(0) channel, it forms part of the peripheral stalk, linking F(1) to F(0). The sequence is that of ATP synthase subunit b from Chlorobium limicola (strain DSM 245 / NBRC 103803 / 6330).